The sequence spans 611 residues: UvrABC system protein C (611 aa).

The region spanning 12-96 (DQPGIYQYFD…IKQLKPKYNI (85 aa)) is the GIY-YIG domain. The region spanning 202–237 (EKILEILNQKMQKYAENLQFEEAAEIRDRIKSIESA) is the UVR domain.

The protein belongs to the UvrC family. In terms of assembly, interacts with UvrB in an incision complex.

It is found in the cytoplasm. Its function is as follows. The UvrABC repair system catalyzes the recognition and processing of DNA lesions. UvrC both incises the 5' and 3' sides of the lesion. The N-terminal half is responsible for the 3' incision and the C-terminal half is responsible for the 5' incision. In Nautilia profundicola (strain ATCC BAA-1463 / DSM 18972 / AmH), this protein is UvrABC system protein C.